The following is a 639-amino-acid chain: CREB3 regulatory factor (639 aa).

Residues 302–422 (PLPQEGPGSL…SVEDLKEVTS (121 aa)) are disordered. Residues 310 to 328 (SLAAGESSSLSASTSVSDS) show a composition bias toward low complexity. A compositionally biased stretch (polar residues) spans 339 to 351 (LFVSDNLGEQPTK). Residues 355–370 (EEDEEDEEDVDDEDHD) show a composition bias toward acidic residues. Over residues 371 to 380 (EGFGSEHELS) the composition is skewed to basic and acidic residues. A compositionally biased stretch (acidic residues) spans 381 to 401 (ENEEEEEEEEDYEDDKDDDIS). The bZIP domain maps to 521–584 (TARPRSRKEK…VNRVQNPRDE (64 aa)). Residues 523–532 (RPRSRKEKNK) form a basic motif region. The tract at residues 533–540 (LASRACRL) is leucine-zipper.

This sequence belongs to the bZIP family. CREBRF subfamily. In terms of assembly, interacts (via leucine-zipper domain) with CREB3 (via leucine-zipper domain); the interaction promotes CREB3 degradation. Post-translationally, probably degraded by the proteasome.

It localises to the nucleus. Acts as a negative regulator of the endoplasmic reticulum stress response or unfolded protein response (UPR). Represses the transcriptional activity of CREB3 during the UPR. Recruits CREB3 into nuclear foci. The polypeptide is CREB3 regulatory factor (CREBRF) (Homo sapiens (Human)).